The sequence spans 392 residues: Zinc finger protein ham-2 (392 aa).

2 consecutive C2H2-type zinc fingers follow at residues 16–39 (FPCS…MQAH) and 43–66 (YTCT…YRVH). The segment at 72–95 (FMCRCCNWAFPDKTSLHIHMQSML) adopts a C2H2-type 3; degenerate zinc-finger fold. Disordered regions lie at residues 106 to 130 (LAKS…PFSP) and 278 to 303 (HISH…HSGE). Residues 112–123 (VVDSTSESGSPR) show a composition bias toward polar residues. The span at 289-303 (SDSHISGGSSSHSGE) shows a compositional bias: low complexity.

The protein resides in the nucleus. Probable transcription factor that acts downstream of egl-15, to promote migration of the HSN motor neurons from the tail to the gonad primordium during HSN cell differentiation. The sequence is that of Zinc finger protein ham-2 from Caenorhabditis elegans.